A 517-amino-acid polypeptide reads, in one-letter code: Acetylcholine receptor subunit gamma (517 aa).

The N-terminal stretch at 1–22 is a signal peptide; it reads MHGGQGPLLLLLLLAVCLGAQG. Topologically, residues 23–240 are extracellular; it reads RNQEERLLAD…VVFYLLIQRK (218 aa). Residues Asn52 and Asn163 are each glycosylated (N-linked (GlcNAc...) asparagine). The cysteines at positions 150 and 164 are disulfide-linked. The next 3 membrane-spanning stretches (helical) occupy residues 241-265, 275-293, and 309-330; these read PLFY…IHFL, TVAI…LVAK, and LTFL…LNVS. The Cytoplasmic segment spans residues 331 to 474; sequence LRSPHTHSMA…WFLVGRVLDR (144 aa). A helical membrane pass occupies residues 475–495; sequence VCFLAMLSLFICGTAGIFLMA.

Belongs to the ligand-gated ion channel (TC 1.A.9) family. Acetylcholine receptor (TC 1.A.9.1) subfamily. Gamma/CHRNG sub-subfamily. Pentamer of two alpha chains, and one each of the beta, delta, and gamma (in immature muscle) or epsilon (in mature muscle) chains.

Its subcellular location is the postsynaptic cell membrane. The protein localises to the cell membrane. The enzyme catalyses K(+)(in) = K(+)(out). The catalysed reaction is Na(+)(in) = Na(+)(out). Functionally, after binding acetylcholine, the AChR responds by an extensive change in conformation that affects all subunits and leads to opening of an ion-conducting channel across the plasma membrane. The polypeptide is Acetylcholine receptor subunit gamma (Homo sapiens (Human)).